The sequence spans 142 residues: Small ribosomal subunit protein uS19 (142 aa).

Serine 2 carries the post-translational modification N-acetylserine. Residues lysine 24, lysine 35, and lysine 64 each participate in a glycyl lysine isopeptide (Lys-Gly) (interchain with G-Cter in ubiquitin) cross-link.

It belongs to the universal ribosomal protein uS19 family. As to quaternary structure, component of the small ribosomal subunit (SSU). Mature yeast ribosomes consist of a small (40S) and a large (60S) subunit. The 40S small subunit contains 1 molecule of ribosomal RNA (18S rRNA) and 33 different proteins (encoded by 57 genes). The large 60S subunit contains 3 rRNA molecules (25S, 5.8S and 5S rRNA) and 46 different proteins (encoded by 81 genes).

Its subcellular location is the cytoplasm. Component of the ribosome, a large ribonucleoprotein complex responsible for the synthesis of proteins in the cell. The small ribosomal subunit (SSU) binds messenger RNAs (mRNAs) and translates the encoded message by selecting cognate aminoacyl-transfer RNA (tRNA) molecules. The large subunit (LSU) contains the ribosomal catalytic site termed the peptidyl transferase center (PTC), which catalyzes the formation of peptide bonds, thereby polymerizing the amino acids delivered by tRNAs into a polypeptide chain. The nascent polypeptides leave the ribosome through a tunnel in the LSU and interact with protein factors that function in enzymatic processing, targeting, and the membrane insertion of nascent chains at the exit of the ribosomal tunnel. uS19 is involved in the nuclear export of the small ribosomal subunit precursor. Has a role in the late stage of the assembly of pre-40S particles within the nucleus and controls their export to the cytoplasm. In Saccharomyces cerevisiae (strain ATCC 204508 / S288c) (Baker's yeast), this protein is Small ribosomal subunit protein uS19.